A 155-amino-acid polypeptide reads, in one-letter code: Endoribonuclease YbeY (155 aa).

Residues His-114, His-118, and His-124 each contribute to the Zn(2+) site.

The protein belongs to the endoribonuclease YbeY family. Requires Zn(2+) as cofactor.

Its subcellular location is the cytoplasm. Functionally, single strand-specific metallo-endoribonuclease involved in late-stage 70S ribosome quality control and in maturation of the 3' terminus of the 16S rRNA. In Buchnera aphidicola subsp. Acyrthosiphon pisum (strain APS) (Acyrthosiphon pisum symbiotic bacterium), this protein is Endoribonuclease YbeY.